Here is a 211-residue protein sequence, read N- to C-terminus: WUSCHEL-related homeobox 14 (211 aa).

The segment at residues 91-155 is a DNA-binding region (homeobox; WUS-type); sequence STRHRWTPTS…NRRARSKRKQ (65 aa). The tract at residues 147 to 183 is disordered; sequence RRARSKRKQPQTTTANGQADDVAVTTEERRSCGDSGG.

Belongs to the WUS homeobox family. As to expression, expressed in root vasculature, pericycle and stamen. Expressed in the procambium during stem maturation.

It is found in the nucleus. Functionally, acts redundantly with WOX4 downstream of the TDR/PXY receptor kinase to regulate procambial cell proliferation and differentiation in vascular tissue, independently of any role in vascular. Involved in the regulation of gibberellin (GA) biosynthesis pathway. Positively regulates the expression of the GA biosynthesis gene GA3OX1, and negatively regulates the expression of GA2OX1 during secondary growth, which increases bioactive GA content in the inflorescence stem. Promotes vascular cell differentiation in the inflorescence stem. Its function is as follows. Transcription factor which may be involved in developmental processes. This is WUSCHEL-related homeobox 14 (WOX14) from Arabidopsis thaliana (Mouse-ear cress).